The primary structure comprises 177 residues: Ribosome maturation factor RimM (177 aa).

Residues 92–166 (EDTFYHADLM…RIVVVPDTNP (75 aa)) enclose the PRC barrel domain.

Belongs to the RimM family. As to quaternary structure, binds ribosomal protein uS19.

Its subcellular location is the cytoplasm. Functionally, an accessory protein needed during the final step in the assembly of 30S ribosomal subunit, possibly for assembly of the head region. Essential for efficient processing of 16S rRNA. May be needed both before and after RbfA during the maturation of 16S rRNA. It has affinity for free ribosomal 30S subunits but not for 70S ribosomes. The protein is Ribosome maturation factor RimM of Azorhizobium caulinodans (strain ATCC 43989 / DSM 5975 / JCM 20966 / LMG 6465 / NBRC 14845 / NCIMB 13405 / ORS 571).